The primary structure comprises 281 residues: HTH-type transcriptional activator RhaR (281 aa).

Positions 178–276 (DKLLAALAAS…GMSPGQWRQR (99 aa)) constitute an HTH araC/xylS-type domain. DNA-binding regions (H-T-H motif) lie at residues 195 to 216 (ERFC…RQQT) and 243 to 266 (IGDI…SREI).

As to quaternary structure, binds DNA as a dimer.

It is found in the cytoplasm. In terms of biological role, activates expression of the rhaSR operon in response to L-rhamnose. This Klebsiella pneumoniae subsp. pneumoniae (strain ATCC 700721 / MGH 78578) protein is HTH-type transcriptional activator RhaR.